The primary structure comprises 840 residues: MSSAVLVTLLPDPSSSFREDAPRPPVPGEEGETPPCQPSVGKVQSTKPMPVSSNARRNEDGLGEPEGRASPDSPLTRWTKSLHSLLGDQDGAYLFRTFLEREKCVDTLDFWFACNGFRQMNLKDTKTLRVAKAIYKRYIENNSVVSKQLKPATKTYIRDGIKKQQIGSVMFDQAQTEIQAVMEENAYQVFLTSDIYLEYVRSGGENTAYMSNGGLGSLKVLCGYLPTLNEEEEWTCADLKCKLSPTVVGLSSKTLRATASVRSTETAENGFRSFKRSDPVNPYHVGSGYVFAPATSANDSELSSDALTDDSMSMTDSSVDGVPPYRMGSKKQLQREMHRSVKANGQVSLPHFPRTHRLPKEMTPVEPAAFAAELISRLEKLKLELESRHSLEERLQQIREDEEKEGSEQALSSRDGAPVQHPLALLPSGSYEEDPQTILDDHLSRVLKTPGCQSPGVGRYSPRSRSPDHHHQHHHHQQCHTLLPTGGKLPPVAACPLLGGKSFLTKQTTKHVHHHYIHHHAVPKTKEEIEAEATQRVRCLCPGGTDYYCYSKCKSHPKAPEPLPGEQFCGSRGGTLPKRNAKGTEPGLALSARDGGMSSAAGAPQLPGEEGDRSQDVWQWMLESERQSKSKPHSAQSIRKSYPLESACAAPGERVSRHHLLGASGHSRSVARAHPFTQDPAMPPLTPPNTLAQLEEACRRLAEVSKPQKQRCCVASQQRDRNHSAAGQAGASPFANPSLAPEDHKEPKKLASVHALQASELVVTYFFCGEEIPYRRMLKAQSLTLGHFKEQLSKKGNYRYYFKKASDEFACGAVFEEIWDDETVLPMYEGRILGKVERID.

The segment at 1–75 (MSSAVLVTLL…EGRASPDSPL (75 aa)) is disordered. Residues 21-30 (APRPPVPGEE) carry the Tankyrase-binding motif motif. The span at 42 to 55 (KVQSTKPMPVSSNA) shows a compositional bias: polar residues. The span at 56–69 (RRNEDGLGEPEGRA) shows a compositional bias: basic and acidic residues. Residues 81-200 (SLHSLLGDQD…LTSDIYLEYV (120 aa)) form the RGS domain. 5 disordered regions span residues 300–363 (SELS…KEMT), 398–435 (IRED…EEDP), 447–485 (LKTP…LLPT), 572–614 (RGGT…GDRS), and 715–745 (ASQQ…EDHK). A compositionally biased stretch (low complexity) spans 303-318 (SSDALTDDSMSMTDSS). The interval 327–413 (MGSKKQLQRE…KEGSEQALSS (87 aa)) is interaction with GSK3B. Residues 413–478 (SRDGAPVQHP…HHHQHHHHQQ (66 aa)) form an interaction with beta-catenin region. A compositionally biased stretch (basic residues) spans 468–478 (DHHHQHHHHQQ). Positions 758-840 (ASELVVTYFF…RILGKVERID (83 aa)) constitute a DIX domain.

Interacts with glycogen synthase kinase-3 beta (GSK3B) and beta-catenin. The interaction between axin and beta-catenin occurs via the armadillo repeats contained in beta-catenin. Interacts with SMAD7 and RNF111. Interacts with ANKRD6. Interacts with SIAH1. Interacts with SIAH2. ADP-ribosylated by tankyrase TNKS and TNKS2. Poly-ADP-ribosylated protein is recognized by RNF146, followed by ubiquitination and subsequent activation of the Wnt signaling pathway. Post-translationally, ubiquitinated by RNF146 when poly-ADP-ribosylated, leading to its degradation and subsequent activation of the Wnt signaling pathway. Deubiquitinated by USP34, deubiquitinated downstream of beta-catenin stabilization step: deubiquitination is important Wnt signaling to positively regulate beta-catenin (CTNBB1)-mediated transcription. In terms of processing, probably phosphorylated by GSK3B and dephosphorylated by PP2A. In terms of tissue distribution, expressed in Tcf7-positive innate-like T-cells (at protein level).

Its subcellular location is the cytoplasm. In terms of biological role, inhibitor of the Wnt signaling pathway. Down-regulates beta-catenin. Probably facilitate the phosphorylation of beta-catenin and APC by GSK3B. The chain is Axin-2 from Mus musculus (Mouse).